Reading from the N-terminus, the 3410-residue chain is Genome polyprotein (3410 aa).

At 1–103 the chain is on the cytoplasmic side; that stretch reads MTKKPGRPGR…DFVHLPKKKS (103 aa). The tract at residues 2 to 15 is interaction with host EXOC1; that stretch reads TKKPGRPGRNRAVN. The segment at 38 to 73 is hydrophobic; homodimerization of capsid protein C; sequence LLDGRGPLRMVLAILAFFRFTALKPTAGLLKRWGMM. Residues 103-119 constitute a propeptide, ER anchor for the capsid protein C, removed in mature form by serine protease NS3; that stretch reads SGVSIIGRMLVFSFTAA. A helical membrane pass occupies residues 104–124; the sequence is GVSIIGRMLVFSFTAAVRVTL. Residues 125-245 are Extracellular-facing; the sequence is ENGMSLMKIQ…ATSYLTKAES (121 aa). Residues 246 to 266 traverse the membrane as a helical segment; it reads WALRNPGYALVAAVLGWSLGT. Residues 267-271 lie on the Cytoplasmic side of the membrane; sequence SNAQK. The chain crosses the membrane as a helical span at residues 272 to 286; the sequence is VIFTVMILLIAPAYS. The Extracellular portion of the chain corresponds to 287–739; the sequence is IRCVGVENRD…QIFGGMFRTL (453 aa). 6 disulfide bridges follow: Cys289-Cys316, Cys346-Cys402, Cys346-Cys407, Cys360-Cys391, Cys378-Cys402, and Cys378-Cys407. The tract at residues 384–397 is fusion peptide; sequence DRGWGNGCGLFGKG. An N-linked (GlcNAc...) asparagine; by host glycan is attached at Asn440. Cystine bridges form between Cys476-Cys574 and Cys591-Cys622. Residues 740 to 760 traverse the membrane as a helical segment; that stretch reads FGGMSWFTQIMIGALCCWLGI. Residues 761–766 lie on the Cytoplasmic side of the membrane; it reads NARDRT. The helical transmembrane segment at 767–787 threads the bilayer; sequence IAVTFLAVGGVLVFLATSVNA. At 788–1165 the chain is on the extracellular side; sequence DSGCALDLKR…IALQEVMRKR (378 aa). Disulfide bonds link Cys791-Cys802, Cys842-Cys928, Cys964-Cys1009, Cys1066-Cys1115, Cys1077-Cys1098, Cys1077-Cys1099, Cys1098-Cys1102, and Cys1099-Cys1102. N-linked (GlcNAc...) asparagine; by host glycosylation is present at Asn915. The helical transmembrane segment at 1166–1186 threads the bilayer; sequence ILGRHITWMVIAVFMAMILGG. Over 1187-1214 the chain is Cytoplasmic; that stretch reads LSYRDLGRYLVLVGAAFAERNSGGDLLH. A helical transmembrane segment spans residues 1215–1235; that stretch reads LVLVATFKVKPMALLGFVLGG. Residues 1236–1242 lie on the Lumenal side of the membrane; the sequence is RWCRRQS. The chain crosses the membrane as a helical span at residues 1243-1263; it reads LLLSIGAVLVNFALEFQGGYF. Residues 1264-1284 are Cytoplasmic-facing; that stretch reads ELVDSLALALLFVKAVVQTDT. Residues 1285 to 1305 traverse the membrane as a helical segment; it reads TSVSLPLLAALAPAGCYTVLG. The Lumenal portion of the chain corresponds to 1306–1335; sequence THRFIMLTLVLVTFLGCKKTASVKKAGTAA. The helical transmembrane segment at 1336–1356 threads the bilayer; the sequence is VGVVLGMVGMKTIPMLGMLMV. Topologically, residues 1357–1363 are cytoplasmic; it reads TSRARRS. The helical transmembrane segment at 1364–1384 threads the bilayer; sequence WPLHEAMAAVGILCALFGALA. The Lumenal segment spans residues 1385–1387; sequence ETE. A helical membrane pass occupies residues 1388–1408; the sequence is VDLAGPLAAAGLIVMAYVISG. Over 1409-1464 the chain is Cytoplasmic; it reads RSNDLSIKKVEDVKWSDEAEVTGESVSYHVSLDVRGDPTLTEDSGPGLEKVLLKVG. Positions 1415–1454 are interacts with and activates NS3 protease; sequence IKKVEDVKWSDEAEVTGESVSYHVSLDVRGDPTLTEDSGP. Positions 1465–1485 form an intramembrane region, helical; the sequence is LMAISGIYPVAIPFALGAWFF. Residues 1486–2158 lie on the Cytoplasmic side of the membrane; sequence LEKRCKRAGA…KAALENSPEM (673 aa). Residues 1493–1670 form the Peptidase S7 domain; that stretch reads AGALWDIPSP…ENVGQEDGAE (178 aa). Residues His1543, Asp1567, and Ser1627 each act as charge relay system; for serine protease NS3 activity in the active site. Residues 1673-1829 enclose the Helicase ATP-binding domain; it reads DNWFRKRELT…PSNSPIIDEE (157 aa). An important for RNA-binding region spans residues 1677–1680; sequence RKRE. ATP is bound at residue 1686–1693; the sequence is LHPGAGKT. Residues 1777–1780 carry the DEAH box motif; that stretch reads DEAH. The region spanning 1839-2006 is the Helicase C-terminal domain; it reads SGYEWIIEFD…QLYTPEREKT (168 aa). Lys1881 bears the N6-acetyllysine; by host mark. The interval 2153–2157 is regulates the ATPase activity of NS3 helicase; it reads ENSPE. Residues 2159–2179 traverse the membrane as a helical segment; the sequence is IETFLLCALVCLMTIGLVVVL. At 2180–2185 the chain is on the lumenal side; the sequence is VRGKGP. The helical intramembrane region spans 2186–2205; that stretch reads GKLAFGMVSIGVMTWLLWSA. Position 2206 (Gly2206) is a topological domain, lumenal. A helical membrane pass occupies residues 2207-2227; it reads VDPGKIAAAVILVFLLLVVLI. Topologically, residues 2228 to 2242 are cytoplasmic; that stretch reads PEPEKQRSVQDNQLA. The chain crosses the membrane as a helical span at residues 2243–2257; that stretch reads MLMLLIATILGGVAA. The Lumenal portion of the chain corresponds to 2258–2293; it reads NEMGWLEKTKADLSWVVRGRSSTTTPVVELDMKPAT. Positions 2294 to 2314 form an intramembrane region, helical; sequence AWTLYALATTLLTPLFQHLIV. The Lumenal portion of the chain corresponds to 2315–2336; that stretch reads TKYANISLMAIASQAGTLFSMD. The chain crosses the membrane as a helical span at residues 2337–2357; the sequence is SGIPFSSIELSVPLLALGCWT. Position 2358 (Gln2358) is a topological domain, cytoplasmic. A helical membrane pass occupies residues 2359–2379; that stretch reads ITPCSLILACVLLSTHYAILL. The Lumenal portion of the chain corresponds to 2380 to 2420; that stretch reads PGMQAQAARDAQRRTAAGIMKNAVVDGIVATDIPPLDGAGP. Residues 2421–2441 form a helical membrane-spanning segment; it reads LTEKKLGQLLLFAAAVTGVVI. Residues 2442 to 3410 lie on the Cytoplasmic side of the membrane; sequence TRSPRSWSEL…EKRVEFRGVL (969 aa). One can recognise an mRNA cap 0-1 NS5-type MT domain in the interval 2508–2773; sequence GGGIGETLGE…DVNLSCGTRA (266 aa). Ser2563 serves as a coordination point for S-adenosyl-L-methionine. Ser2563 carries the phosphoserine modification. Lys2568 acts as the For 2'-O-MTase activity in catalysis. S-adenosyl-L-methionine contacts are provided by Gly2593, Trp2594, Thr2611, Lys2612, Asp2638, and Val2639. The active-site For 2'-O-MTase activity is Asp2653. Residue Ile2654 participates in S-adenosyl-L-methionine binding. Residues Lys2690 and Glu2726 each act as for 2'-O-MTase activity in the active site. Tyr2728 is an S-adenosyl-L-methionine binding site. 4 residues coordinate Zn(2+): Glu2947, His2951, Cys2956, and Cys2959. A RdRp catalytic domain is found at 3036 to 3187; it reads GILYADDTAG…AAPDARFGAA (152 aa). Residues His3222, Cys3238, and Cys3356 each coordinate Zn(2+).

This sequence in the N-terminal section; belongs to the class I-like SAM-binding methyltransferase superfamily. mRNA cap 0-1 NS5-type methyltransferase family. As to quaternary structure, homodimer. Interacts (via N-terminus) with host EXOC1 (via C-terminus); this interaction results in EXOC1 degradation through the proteasome degradation pathway. Forms heterodimers with envelope protein E in the endoplasmic reticulum and Golgi. In terms of assembly, homodimer; in the endoplasmic reticulum and Golgi. Interacts with protein prM. Interacts with non-structural protein 1. As to quaternary structure, homodimer; Homohexamer when secreted. Interacts with envelope protein E. NS1 interacts with NS4B. Interacts with host complement protein CFH; this interaction leads to the degradation of C3. Interacts (via N-terminus) with serine protease NS3. In terms of assembly, forms a heterodimer with serine protease NS3. May form homooligomers. As to quaternary structure, forms a heterodimer with NS2B. Interacts with non-structural protein 2A (via N-terminus). Interacts with NS4B. Interacts with unphosphorylated RNA-directed RNA polymerase NS5; this interaction stimulates RNA-directed RNA polymerase NS5 guanylyltransferase activity. Interacts with serine protease NS3. In terms of assembly, homodimer. Interacts with host STAT2; this interaction inhibits the phosphorylation of the latter, and, when all viral proteins are present (polyprotein), targets STAT2 for degradation. Post-translationally, specific enzymatic cleavages in vivo yield mature proteins. Cleavages in the lumen of endoplasmic reticulum are performed by host signal peptidase, whereas cleavages in the cytoplasmic side are performed by serine protease NS3. Signal cleavage at the 2K-4B site requires a prior NS3 protease-mediated cleavage at the 4A-2K site. In terms of processing, cleaved in post-Golgi vesicles by a host furin, releasing the mature small envelope protein M, and peptide pr. This cleavage is incomplete as up to 30% of viral particles still carry uncleaved prM. N-glycosylated. Post-translationally, N-glycosylated. The excreted form is glycosylated and this is required for efficient secretion of the protein from infected cells. In terms of processing, acetylated by host KAT5. Acetylation modulates NS3 RNA-binding and unwinding activities and plays an important positive role for viral replication. Phosphorylated on serines residues. This phosphorylation may trigger NS5 nuclear localization.

It localises to the virion. It is found in the host nucleus. Its subcellular location is the host cytoplasm. The protein resides in the host perinuclear region. The protein localises to the secreted. It localises to the virion membrane. It is found in the host endoplasmic reticulum membrane. It carries out the reaction Selective hydrolysis of -Xaa-Xaa-|-Yaa- bonds in which each of the Xaa can be either Arg or Lys and Yaa can be either Ser or Ala.. The enzyme catalyses RNA(n) + a ribonucleoside 5'-triphosphate = RNA(n+1) + diphosphate. It catalyses the reaction a ribonucleoside 5'-triphosphate + H2O = a ribonucleoside 5'-diphosphate + phosphate + H(+). The catalysed reaction is ATP + H2O = ADP + phosphate + H(+). It carries out the reaction a 5'-end (5'-triphosphoguanosine)-ribonucleoside in mRNA + S-adenosyl-L-methionine = a 5'-end (N(7)-methyl 5'-triphosphoguanosine)-ribonucleoside in mRNA + S-adenosyl-L-homocysteine. The enzyme catalyses a 5'-end (N(7)-methyl 5'-triphosphoguanosine)-ribonucleoside in mRNA + S-adenosyl-L-methionine = a 5'-end (N(7)-methyl 5'-triphosphoguanosine)-(2'-O-methyl-ribonucleoside) in mRNA + S-adenosyl-L-homocysteine + H(+). In terms of biological role, plays a role in virus budding by binding to the cell membrane and gathering the viral RNA into a nucleocapsid that forms the core of a mature virus particle. During virus entry, may induce genome penetration into the host cytoplasm after hemifusion induced by the surface proteins. Can migrate to the cell nucleus where it modulates host functions. Overcomes the anti-viral effects of host EXOC1 by sequestering and degrading the latter through the proteasome degradation pathway. Functionally, inhibits RNA silencing by interfering with host Dicer. Its function is as follows. Prevents premature fusion activity of envelope proteins in trans-Golgi by binding to envelope protein E at pH6.0. After virion release in extracellular space, gets dissociated from E dimers. Acts as a chaperone for envelope protein E during intracellular virion assembly by masking and inactivating envelope protein E fusion peptide. prM is the only viral peptide matured by host furin in the trans-Golgi network probably to avoid catastrophic activation of the viral fusion activity in acidic Golgi compartment prior to virion release. prM-E cleavage is inefficient, and many virions are only partially matured. These uncleaved prM would play a role in immune evasion. In terms of biological role, may play a role in virus budding. Exerts cytotoxic effects by activating a mitochondrial apoptotic pathway through M ectodomain. May display a viroporin activity. Functionally, binds to host cell surface receptor and mediates fusion between viral and cellular membranes. Envelope protein is synthesized in the endoplasmic reticulum in the form of heterodimer with protein prM. They play a role in virion budding in the ER, and the newly formed immature particle is covered with 60 spikes composed of heterodimer between precursor prM and envelope protein E. The virion is transported to the Golgi apparatus where the low pH causes dissociation of PrM-E heterodimers and formation of E homodimers. prM-E cleavage is inefficient, and many virions are only partially matured. These uncleaved prM would play a role in immune evasion. Its function is as follows. Involved in immune evasion, pathogenesis and viral replication. Once cleaved off the polyprotein, is targeted to three destinations: the viral replication cycle, the plasma membrane and the extracellular compartment. Essential for viral replication. Required for formation of the replication complex and recruitment of other non-structural proteins to the ER-derived membrane structures. Excreted as a hexameric lipoparticle that plays a role against host immune response. Antagonizing the complement function. Binds to the host macrophages and dendritic cells. Inhibits signal transduction originating from Toll-like receptor 3 (TLR3). Component of the viral RNA replication complex that functions in virion assembly and antagonizes the host alpha/beta interferon antiviral response. In terms of biological role, required cofactor for the serine protease function of NS3. May have membrane-destabilizing activity and form viroporins. Functionally, displays three enzymatic activities: serine protease, NTPase and RNA helicase. NS3 serine protease, in association with NS2B, performs its autocleavage and cleaves the polyprotein at dibasic sites in the cytoplasm: C-prM, NS2A-NS2B, NS2B-NS3, NS3-NS4A, NS4A-2K and NS4B-NS5. NS3 RNA helicase binds RNA and unwinds dsRNA in the 3' to 5' direction. Its function is as follows. Regulates the ATPase activity of the NS3 helicase activity. NS4A allows NS3 helicase to conserve energy during unwinding. Functions as a signal peptide for NS4B and is required for the interferon antagonism activity of the latter. In terms of biological role, induces the formation of ER-derived membrane vesicles where the viral replication takes place. Inhibits interferon (IFN)-induced host STAT1 phosphorylation and nuclear translocation, thereby preventing the establishment of cellular antiviral state by blocking the IFN-alpha/beta pathway. Inhibits STAT2 translocation in the nucleus after IFN-alpha treatment. Functionally, replicates the viral (+) and (-) RNA genome, and performs the capping of genomes in the cytoplasm. NS5 methylates viral RNA cap at guanine N-7 and ribose 2'-O positions. Besides its role in RNA genome replication, also prevents the establishment of cellular antiviral state by blocking the interferon-alpha/beta (IFN-alpha/beta) signaling pathway. Inhibits host TYK2 and STAT2 phosphorylation, thereby preventing activation of JAK-STAT signaling pathway. The chain is Genome polyprotein from Kokobera virus (KOKV).